Consider the following 212-residue polypeptide: Thymidylate kinase (212 aa).

11–18 contributes to the ATP binding site; sequence GPEGAGKT.

The protein belongs to the thymidylate kinase family.

The enzyme catalyses dTMP + ATP = dTDP + ADP. Its function is as follows. Phosphorylation of dTMP to form dTDP in both de novo and salvage pathways of dTTP synthesis. The chain is Thymidylate kinase from Streptococcus pneumoniae serotype 2 (strain D39 / NCTC 7466).